The chain runs to 203 residues: Cytochrome c biogenesis ATP-binding export protein CcmA (203 aa).

In terms of domain architecture, ABC transporter spans 2-203 (LEALDLAGVR…KTSQTVRMGA (202 aa)). 34-41 (GENGSGKT) contacts ATP.

Belongs to the ABC transporter superfamily. CcmA exporter (TC 3.A.1.107) family. As to quaternary structure, the complex is composed of two ATP-binding proteins (CcmA) and two transmembrane proteins (CcmB).

It is found in the cell inner membrane. It catalyses the reaction heme b(in) + ATP + H2O = heme b(out) + ADP + phosphate + H(+). In terms of biological role, part of the ABC transporter complex CcmAB involved in the biogenesis of c-type cytochromes; once thought to export heme, this seems not to be the case, but its exact role is uncertain. Responsible for energy coupling to the transport system. The chain is Cytochrome c biogenesis ATP-binding export protein CcmA from Pseudomonas aeruginosa.